Reading from the N-terminus, the 269-residue chain is C-type lectin domain family 1 member A (269 aa).

At 1-51 (MQAKYSSTRDMLDDDDTTISLYSGTSTVTRRAEPRHSENGTPSSVWRPVAL) the chain is on the cytoplasmic side. The chain crosses the membrane as a helical; Signal-anchor for type II membrane protein span at residues 52–72 (TLLTLCLVLLVGLAALGLVFF). Residues 73–269 (QFYQLSNIQQ…AGRVVPGELQ (197 aa)) lie on the Extracellular side of the membrane. N-linked (GlcNAc...) asparagine glycosylation is found at N94, N126, N168, and N202. The 115-residue stretch at 143–257 (YGDKCYQFYK…CKELRRCACE (115 aa)) folds into the C-type lectin domain. 2 disulfide bridges follow: C164–C256 and C235–C248.

It localises to the membrane. The sequence is that of C-type lectin domain family 1 member A (Clec1a) from Mus musculus (Mouse).